The following is a 350-amino-acid chain: tRNA uridine(34) hydroxylase (350 aa).

Positions 146 to 240 (DDPDALFIDM…YARKAREQGL (95 aa)) constitute a Rhodanese domain. The active-site Cysteine persulfide intermediate is Cys-200.

This sequence belongs to the TrhO family.

The enzyme catalyses uridine(34) in tRNA + AH2 + O2 = 5-hydroxyuridine(34) in tRNA + A + H2O. Functionally, catalyzes oxygen-dependent 5-hydroxyuridine (ho5U) modification at position 34 in tRNAs, the first step in 5-carboxymethoxyuridine (cmo5U) biosynthesis. May be part of an alternate pathway, which is able to bypass cmo5U biogenesis in a subset of tRNAs under aerobic conditions. This chain is tRNA uridine(34) hydroxylase, found in Escherichia coli (strain SMS-3-5 / SECEC).